The sequence spans 377 residues: MTHDLAASGLRFGIEEEFFLLDASDLDIVRSAPAGFVAACRDTLGEHFAEEMFECQVEVASPVFSTLAEAARFHGQARQRLAHLAMDFGLRSLCVGTHPFADWRRARSNPAAHFARLFEDQGRVARRSLVCGLHVHVEIPPSHDRMAVLQRVLPWLPLLLALSASSPFRGGRRSGLASYRRALCGEWPRMNIPPALPDEDAYRRHLALLRETGCIREDGQVWWMIRPSSHVPTLELRICDACPRLADALSLAGLFRALVGEALGADPRALPVARDACLEENYWQALRYGCAGRYLVEGRCVGAGDWLEMAWRQCRPQARQGNEWAYQHACGLLEETSAARQLRRYRRLREAGQERHPALRRLVEELLEENLQPALAG.

It belongs to the glutamate--cysteine ligase type 2 family. YbdK subfamily.

The catalysed reaction is L-cysteine + L-glutamate + ATP = gamma-L-glutamyl-L-cysteine + ADP + phosphate + H(+). ATP-dependent carboxylate-amine ligase which exhibits weak glutamate--cysteine ligase activity. The chain is Putative glutamate--cysteine ligase 2 from Pseudomonas aeruginosa (strain ATCC 15692 / DSM 22644 / CIP 104116 / JCM 14847 / LMG 12228 / 1C / PRS 101 / PAO1).